Reading from the N-terminus, the 322-residue chain is 4-diphosphocytidyl-2-C-methyl-D-erythritol kinase (322 aa).

Lys-27 is an active-site residue. 112-122 (PVAGGMAGGSA) is a binding site for ATP. Asp-154 is an active-site residue.

It belongs to the GHMP kinase family. IspE subfamily.

It carries out the reaction 4-CDP-2-C-methyl-D-erythritol + ATP = 4-CDP-2-C-methyl-D-erythritol 2-phosphate + ADP + H(+). Its pathway is isoprenoid biosynthesis; isopentenyl diphosphate biosynthesis via DXP pathway; isopentenyl diphosphate from 1-deoxy-D-xylulose 5-phosphate: step 3/6. Functionally, catalyzes the phosphorylation of the position 2 hydroxy group of 4-diphosphocytidyl-2C-methyl-D-erythritol. This is 4-diphosphocytidyl-2-C-methyl-D-erythritol kinase from Mycolicibacterium smegmatis (strain ATCC 700084 / mc(2)155) (Mycobacterium smegmatis).